The sequence spans 283 residues: Nucleotide-binding protein IL0393 (283 aa).

8-15 (GRSGSGKT) contributes to the ATP binding site. 56-59 (DVRN) contributes to the GTP binding site.

It belongs to the RapZ-like family.

Displays ATPase and GTPase activities. The protein is Nucleotide-binding protein IL0393 of Idiomarina loihiensis (strain ATCC BAA-735 / DSM 15497 / L2-TR).